The chain runs to 241 residues: Proteasome subunit alpha (241 aa).

Belongs to the peptidase T1A family. In terms of assembly, the 20S proteasome core is composed of 14 alpha and 14 beta subunits that assemble into four stacked heptameric rings, resulting in a barrel-shaped structure. The two inner rings, each composed of seven catalytic beta subunits, are sandwiched by two outer rings, each composed of seven alpha subunits. The catalytic chamber with the active sites is on the inside of the barrel. Has a gated structure, the ends of the cylinder being occluded by the N-termini of the alpha-subunits. Is capped at one or both ends by the proteasome regulatory ATPase, PAN.

Its subcellular location is the cytoplasm. With respect to regulation, the formation of the proteasomal ATPase PAN-20S proteasome complex, via the docking of the C-termini of PAN into the intersubunit pockets in the alpha-rings, triggers opening of the gate for substrate entry. Interconversion between the open-gate and close-gate conformations leads to a dynamic regulation of the 20S proteasome proteolysis activity. In terms of biological role, component of the proteasome core, a large protease complex with broad specificity involved in protein degradation. The sequence is that of Proteasome subunit alpha from Saccharolobus islandicus (strain M.16.4 / Kamchatka #3) (Sulfolobus islandicus).